The chain runs to 644 residues: Exoribonuclease 2 (644 aa).

The RNB domain maps to 190–516; it reads REDLTALDFI…INHRLLKALI (327 aa). The S1 motif domain maps to 562–644; sequence DSRFAAEIID…ENRSVIARPV (83 aa).

The protein belongs to the RNR ribonuclease family. RNase II subfamily.

It localises to the cytoplasm. The catalysed reaction is Exonucleolytic cleavage in the 3'- to 5'-direction to yield nucleoside 5'-phosphates.. Its function is as follows. Involved in mRNA degradation. Hydrolyzes single-stranded polyribonucleotides processively in the 3' to 5' direction. The chain is Exoribonuclease 2 from Sodalis glossinidius (strain morsitans).